A 1522-amino-acid polypeptide reads, in one-letter code: Rho guanine nucleotide exchange factor 11 (1522 aa).

The segment at methionine 1–threonine 40 is disordered. Residues serine 2, serine 14, serine 16, and serine 35 each carry the phosphoserine modification. The 80-residue stretch at cysteine 47–serine 126 folds into the PDZ domain. Disordered regions lie at residues glycine 128 to glutamine 175 and tyrosine 200 to proline 231. Over residues proline 149–glutamine 161 the composition is skewed to pro residues. Serine 245 and serine 251 each carry phosphoserine. Threonine 254 is subject to Phosphothreonine. Serine 255 and serine 271 each carry phosphoserine. A disordered region spans residues alanine 263–serine 286. The RGSL domain occupies glutamate 306–arginine 486. Residues leucine 444 to alanine 470 adopt a coiled-coil conformation. Residues alanine 490–leucine 555 are disordered. Over residues serine 521–arginine 533 the composition is skewed to basic and acidic residues. Residues serine 556, serine 635, and serine 663 each carry the phosphoserine modification. Positions glutamate 573–isoleucine 680 are disordered. Over residues aspartate 601–valine 637 the composition is skewed to basic and acidic residues. Residues serine 651–leucine 664 are compositionally biased toward low complexity. Threonine 668 and threonine 672 each carry phosphothreonine. A DH domain is found at aspartate 734 to alanine 923. Residues lysine 965–arginine 1079 enclose the PH domain. The segment at histidine 1084 to glycine 1141 is disordered. The segment covering proline 1091–arginine 1100 has biased composition (pro residues). Residues valine 1112–proline 1124 are compositionally biased toward basic and acidic residues. A Phosphoserine modification is found at serine 1155. 3 disordered regions span residues glutamate 1223–tyrosine 1320, lysine 1332–glycine 1423, and leucine 1453–proline 1522. A compositionally biased stretch (polar residues) spans proline 1236–serine 1245. Residues serine 1295 and serine 1300 each carry the phosphoserine modification. Low complexity predominate over residues proline 1338–glycine 1353. A phosphoserine mark is found at serine 1457 and serine 1458. Residues threonine 1462 and threonine 1475 each carry the phosphothreonine modification. A Phosphoserine modification is found at serine 1480. Residues aspartate 1503–threonine 1513 are compositionally biased toward acidic residues.

Interacts with GNA12 and GNA13 through the RGS domain. Interacts with RHOA, PLXNB1 and PLXNB2. Interacts with SLC1A6. Interacts (via DH domain) with GCSAM (via C-terminus). Found in a complex with ARHGEF11 and ARHGEF12; binding to ARHGEF11 and ARHGEF12 enhances CDC42 GEF activity of PLEKHG4B, and PLEKHG4B, in turn, inhibits ARHGEF11- and ARHGEF12-mediated RHOA activation. In terms of processing, phosphorylated by MAP kinase p38 (MAPK11, MAPK12, MAPK13 and/or MAPK14). Ubiquitinated by the BCR(KLHL20) E3 ubiquitin ligase complex when previously phosphorylated by MAP kinase p38 (MAPK11, MAPK12, MAPK13 and/or MAPK14), leading to its degradation, thereby restricting RhoA activity and facilitating growth cone spreading and neurite outgrowth. In terms of tissue distribution, ubiquitously expressed.

The protein resides in the cytoplasm. It localises to the membrane. In terms of biological role, may play a role in the regulation of RhoA GTPase by guanine nucleotide-binding alpha-12 (GNA12) and alpha-13 (GNA13). Acts as guanine nucleotide exchange factor (GEF) for RhoA GTPase and may act as GTPase-activating protein (GAP) for GNA12 and GNA13. Involved in neurotrophin-induced neurite outgrowth. This is Rho guanine nucleotide exchange factor 11 (ARHGEF11) from Homo sapiens (Human).